A 364-amino-acid polypeptide reads, in one-letter code: Probable mannose-1-phosphate guanylyltransferase 2 (364 aa).

The GDP-alpha-D-mannose site is built by leucine 6 and valine 7. Diphosphate contacts are provided by glycine 9, glycine 11, threonine 12, arginine 13, and lysine 23. Residues glycine 88, asparagine 112, aspartate 114, glycine 149, and asparagine 176 each coordinate GDP-alpha-D-mannose.

This sequence belongs to the transferase hexapeptide repeat family.

It carries out the reaction alpha-D-mannose 1-phosphate + GTP + H(+) = GDP-alpha-D-mannose + diphosphate. It functions in the pathway nucleotide-sugar biosynthesis; GDP-alpha-D-mannose biosynthesis; GDP-alpha-D-mannose from alpha-D-mannose 1-phosphate (GTP route): step 1/1. Functionally, catalyzes a reaction of the Smirnoff-Wheeler pathway, the major route to ascorbate biosynthesis in plants. The polypeptide is Probable mannose-1-phosphate guanylyltransferase 2 (Arabidopsis thaliana (Mouse-ear cress)).